Here is a 115-residue protein sequence, read N- to C-terminus: MEEEMIIGISTSFSAAHSIPGHKKCGKVHGHNFKVEVEISGKVKENGMVMDFFDLKRIVNEVVAKFDHTLLNEQIEIPTSENICLRIFSELAEKGLNVRRVRVAENEDKWAEIRR.

H17 serves as a coordination point for Zn(2+). Catalysis depends on C25, which acts as the Proton acceptor. The Zn(2+) site is built by H29 and H31. Residues H68 and E105 each act as charge relay system in the active site.

Belongs to the PTPS family. QueD subfamily. Zn(2+) is required as a cofactor.

It catalyses the reaction 7,8-dihydroneopterin 3'-triphosphate + H2O = 6-carboxy-5,6,7,8-tetrahydropterin + triphosphate + acetaldehyde + 2 H(+). The protein operates within purine metabolism; 7-cyano-7-deazaguanine biosynthesis. Its function is as follows. Catalyzes the conversion of 7,8-dihydroneopterin triphosphate (H2NTP) to 6-carboxy-5,6,7,8-tetrahydropterin (CPH4) and acetaldehyde. The chain is Putative 6-carboxy-5,6,7,8-tetrahydropterin synthase (queD) from Archaeoglobus fulgidus (strain ATCC 49558 / DSM 4304 / JCM 9628 / NBRC 100126 / VC-16).